Reading from the N-terminus, the 513-residue chain is ATP synthase subunit alpha (513 aa).

ATP is bound at residue 169-176 (GDRQIGKT).

Belongs to the ATPase alpha/beta chains family. In terms of assembly, F-type ATPases have 2 components, CF(1) - the catalytic core - and CF(0) - the membrane proton channel. CF(1) has five subunits: alpha(3), beta(3), gamma(1), delta(1), epsilon(1). CF(0) has three main subunits: a(1), b(2) and c(9-12). The alpha and beta chains form an alternating ring which encloses part of the gamma chain. CF(1) is attached to CF(0) by a central stalk formed by the gamma and epsilon chains, while a peripheral stalk is formed by the delta and b chains.

The protein localises to the cell inner membrane. It carries out the reaction ATP + H2O + 4 H(+)(in) = ADP + phosphate + 5 H(+)(out). Produces ATP from ADP in the presence of a proton gradient across the membrane. The alpha chain is a regulatory subunit. This Francisella tularensis subsp. tularensis (strain SCHU S4 / Schu 4) protein is ATP synthase subunit alpha.